A 219-amino-acid polypeptide reads, in one-letter code: Salivary IL-4-inducing protein (219 aa).

The signal sequence occupies residues 1–19; sequence MKYLLTLLMALSLVNLMLT. Positions 19–109 are disordered; it reads TRPTPEDDGG…KNDPRETYNK (91 aa). Low complexity predominate over residues 30 to 43; the sequence is SEEPQTQETTGETT. Over residues 72 to 107 the composition is skewed to basic and acidic residues; sequence DDTAKKEDDGESKDGEGSEKSDKEKGEPKNDPRETY.

Salivary gland (at protein level).

The protein resides in the secreted. Functionally, induces expression of IL4 in host skin by diverting host CD4 cells away from Th1 and towards Th2 responsiveness. Induces expression of IL10 in host skin. Down-regulates expression of IL12B, IFN-gamma (IFNG) and TNF-alpha (TNF) in host skin. The polypeptide is Salivary IL-4-inducing protein (Aedes aegypti (Yellowfever mosquito)).